The following is a 348-amino-acid chain: tRNA N6-adenosine threonylcarbamoyltransferase (348 aa).

Residues H115 and H119 each contribute to the Fe cation site. Substrate contacts are provided by residues 138–142, D171, G184, and N276; that span reads LVSGG. Fe cation is bound at residue D304.

This sequence belongs to the KAE1 / TsaD family. Fe(2+) serves as cofactor.

The protein localises to the cytoplasm. The catalysed reaction is L-threonylcarbamoyladenylate + adenosine(37) in tRNA = N(6)-L-threonylcarbamoyladenosine(37) in tRNA + AMP + H(+). Functionally, required for the formation of a threonylcarbamoyl group on adenosine at position 37 (t(6)A37) in tRNAs that read codons beginning with adenine. Is involved in the transfer of the threonylcarbamoyl moiety of threonylcarbamoyl-AMP (TC-AMP) to the N6 group of A37, together with TsaE and TsaB. TsaD likely plays a direct catalytic role in this reaction. This is tRNA N6-adenosine threonylcarbamoyltransferase from Xylella fastidiosa (strain M23).